Consider the following 210-residue polypeptide: Glutathione S-transferase 2 (210 aa).

The region spanning 1–80 is the GST N-terminal domain; the sequence is MDFYYLPLSA…YLVEKYGKQN (80 aa). Residues Ser9, 50–52, and 64–66 contribute to the glutathione site; these read HTI and ESR. The GST C-terminal domain occupies 87–208; the sequence is CPKKRALINQ…AGCLEMKKYF (122 aa).

This sequence belongs to the GST superfamily. Theta family. As to quaternary structure, homodimer.

It catalyses the reaction RX + glutathione = an S-substituted glutathione + a halide anion + H(+). In terms of biological role, conjugation of reduced glutathione to a wide number of exogenous and endogenous hydrophobic electrophiles. In Musca domestica (House fly), this protein is Glutathione S-transferase 2 (Gst2).